Reading from the N-terminus, the 475-residue chain is UDP-N-acetylmuramate--L-alanine ligase (475 aa).

121-127 (GTHGKTT) serves as a coordination point for ATP.

This sequence belongs to the MurCDEF family.

The protein localises to the cytoplasm. The enzyme catalyses UDP-N-acetyl-alpha-D-muramate + L-alanine + ATP = UDP-N-acetyl-alpha-D-muramoyl-L-alanine + ADP + phosphate + H(+). The protein operates within cell wall biogenesis; peptidoglycan biosynthesis. Cell wall formation. This Salinibacter ruber (strain DSM 13855 / M31) protein is UDP-N-acetylmuramate--L-alanine ligase.